The primary structure comprises 671 residues: DNA ligase (671 aa).

Residues 32–36 (DAEYD), 81–82 (SL), and Glu113 each bind NAD(+). Catalysis depends on Lys115, which acts as the N6-AMP-lysine intermediate. 4 residues coordinate NAD(+): Arg136, Glu173, Lys290, and Lys314. Zn(2+)-binding residues include Cys408, Cys411, Cys426, and Cys432. Positions 593–671 (EIDSPFAGKT…ETEMLHLLGS (79 aa)) constitute a BRCT domain.

It belongs to the NAD-dependent DNA ligase family. LigA subfamily. It depends on Mg(2+) as a cofactor. The cofactor is Mn(2+).

It carries out the reaction NAD(+) + (deoxyribonucleotide)n-3'-hydroxyl + 5'-phospho-(deoxyribonucleotide)m = (deoxyribonucleotide)n+m + AMP + beta-nicotinamide D-nucleotide.. In terms of biological role, DNA ligase that catalyzes the formation of phosphodiester linkages between 5'-phosphoryl and 3'-hydroxyl groups in double-stranded DNA using NAD as a coenzyme and as the energy source for the reaction. It is essential for DNA replication and repair of damaged DNA. The chain is DNA ligase from Escherichia coli O6:K15:H31 (strain 536 / UPEC).